Consider the following 155-residue polypeptide: Ribosomal RNA large subunit methyltransferase H (155 aa).

Residues L72, G103, and L122 to L127 each bind S-adenosyl-L-methionine.

This sequence belongs to the RNA methyltransferase RlmH family. Homodimer.

It localises to the cytoplasm. It catalyses the reaction pseudouridine(1915) in 23S rRNA + S-adenosyl-L-methionine = N(3)-methylpseudouridine(1915) in 23S rRNA + S-adenosyl-L-homocysteine + H(+). In terms of biological role, specifically methylates the pseudouridine at position 1915 (m3Psi1915) in 23S rRNA. This chain is Ribosomal RNA large subunit methyltransferase H, found in Aeromonas hydrophila subsp. hydrophila (strain ATCC 7966 / DSM 30187 / BCRC 13018 / CCUG 14551 / JCM 1027 / KCTC 2358 / NCIMB 9240 / NCTC 8049).